A 373-amino-acid chain; its full sequence is MTGNDILLWDETLFKDLSVLEPDYLPEYFPHRDSQLNALRFALKPALRGMRPLNCLLVGPPGTGKTSAIMKTFREVEAHAPNVVTVKVNCQIDSTRFAVMSRIYRQLFGISPPNSGIAFRKLFETVVNFLVSSEKVLIVALDDLNYLCCEGHANEVMYSLLRAHEQYPGAKIGVIGIVNDASDLYCLDSRVNSVFLPEEVSFPRYEEGEILDILKDRVRYGFYPKVISDEVLKLVVSYVEKTGDLRVGIDLLRRSGFNAERKGRRMILFEDVEKAYEASKLLHLCRGISLLSDPEKQLLELIAKKDEIKAGELYKSFHELTQLGYTRFYGMVNRLQTLNYVDADFTGKGKRGRTRIIKTKYEAEDILNCLKKA.

ATP contacts are provided by residues 63–67, tyrosine 205, and arginine 217; that span reads TGKTS.

This sequence belongs to the CDC6/cdc18 family.

Its function is as follows. Involved in regulation of DNA replication. This is ORC1-type DNA replication protein 2 (cdc6-2) from Methanosarcina mazei (strain ATCC BAA-159 / DSM 3647 / Goe1 / Go1 / JCM 11833 / OCM 88) (Methanosarcina frisia).